A 54-amino-acid polypeptide reads, in one-letter code: Large ribosomal subunit protein bL33 (54 aa).

Belongs to the bacterial ribosomal protein bL33 family.

This is Large ribosomal subunit protein bL33 from Thermobifida fusca (strain YX).